The following is a 513-amino-acid chain: Bifunctional purine biosynthesis protein PurH (513 aa).

An MGS-like domain is found at 1 to 144 (MKRALVSVSD…KNYRDVTIVV (144 aa)).

It belongs to the PurH family.

The catalysed reaction is (6R)-10-formyltetrahydrofolate + 5-amino-1-(5-phospho-beta-D-ribosyl)imidazole-4-carboxamide = 5-formamido-1-(5-phospho-D-ribosyl)imidazole-4-carboxamide + (6S)-5,6,7,8-tetrahydrofolate. It carries out the reaction IMP + H2O = 5-formamido-1-(5-phospho-D-ribosyl)imidazole-4-carboxamide. It participates in purine metabolism; IMP biosynthesis via de novo pathway; 5-formamido-1-(5-phospho-D-ribosyl)imidazole-4-carboxamide from 5-amino-1-(5-phospho-D-ribosyl)imidazole-4-carboxamide (10-formyl THF route): step 1/1. Its pathway is purine metabolism; IMP biosynthesis via de novo pathway; IMP from 5-formamido-1-(5-phospho-D-ribosyl)imidazole-4-carboxamide: step 1/1. The polypeptide is Bifunctional purine biosynthesis protein PurH (Lactobacillus delbrueckii subsp. bulgaricus (strain ATCC BAA-365 / Lb-18)).